We begin with the raw amino-acid sequence, 276 residues long: Elongation factor Ts, mitochondrial (276 aa).

This sequence belongs to the EF-Ts family.

It is found in the mitochondrion. Functionally, associates with the EF-Tu.GDP complex and induces the exchange of GDP to GTP. It remains bound to the aminoacyl-tRNA.EF-Tu.GTP complex up to the GTP hydrolysis stage on the ribosome. This Leishmania infantum protein is Elongation factor Ts, mitochondrial.